Here is a 116-residue protein sequence, read N- to C-terminus: Large ribosomal subunit protein bL20 (116 aa).

This sequence belongs to the bacterial ribosomal protein bL20 family.

Binds directly to 23S ribosomal RNA and is necessary for the in vitro assembly process of the 50S ribosomal subunit. It is not involved in the protein synthesizing functions of that subunit. The polypeptide is Large ribosomal subunit protein bL20 (Fusobacterium nucleatum subsp. nucleatum (strain ATCC 25586 / DSM 15643 / BCRC 10681 / CIP 101130 / JCM 8532 / KCTC 2640 / LMG 13131 / VPI 4355)).